The primary structure comprises 852 residues: Cytochrome P450 monooxygenase mpaDE (852 aa).

The Lumenal segment spans residues 1–6 (MDYLII). The helical transmembrane segment at 7 to 29 (IRITAVAVVLYLTRYVCCLYLHL) threads the bilayer. Residues 30-852 (QDVPGPLFAK…DLEDAMEGTK (823 aa)) lie on the Cytoplasmic side of the membrane. Cys448 lines the heme pocket.

Belongs to the cytochrome P450 family. Heme serves as cofactor.

Its subcellular location is the endoplasmic reticulum membrane. It carries out the reaction 5-methylorsellinate + reduced [NADPH--hemoprotein reductase] + O2 = 4,6-dihydroxy-2-(hydroxymethyl)-3-methylbenzoate + oxidized [NADPH--hemoprotein reductase] + H2O + H(+). The enzyme catalyses 4,6-dihydroxy-2-(hydroxymethyl)-3-methylbenzoate + H(+) = 5,7-dihydroxy-4-methylphthalide + H2O. The protein operates within secondary metabolite biosynthesis; terpenoid biosynthesis. Cytochrome P450 monooxygenase; part of the gene cluster that mediates the biosynthesis of mycophenolic acid (MPA), the first isolated antibiotic natural product in the world obtained from a culture of Penicillium brevicompactum in 1893. MpaDE is an endoplasmic reticulum-bound enzyme that catalyzes the conversion of 5-methylorsellinic acid (5MOA) into the phthalide compound 5,7-dihydroxy-4,6-dimethylphthalide (DHMP). MpaDE first catalyzes hydroxylation of 5-MOA to 4,6-dihydroxy-2-(hydroxymethyl)-3-methylbenzoic acid (DHMB), and then acts as a lactone synthase that catalyzes the ring closure to convert DHMB into DHMP. The first step of the pathway is the synthesis of 5-methylorsellinic acid (5MOA) by the cytosolic polyketide synthase mpaC. 5MOA is then converted to the phthalide compound 5,7-dihydroxy-4,6-dimethylphthalide (DHMP) by the endoplasmic reticulum-bound cytochrome P450 monooxygenase mpaDE. MpaDE first catalyzes hydroxylation of 5-MOA to 4,6-dihydroxy-2-(hydroxymethyl)-3-methylbenzoic acid (DHMB). MpaDE then acts as a lactone synthase that catalyzes the ring closure to convert DHMB into DHMP. The next step is the prenylation of DHMP by the Golgi apparatus-associated prenyltransferase mpaA to yield farnesyl-DHMP (FDHMP). The ER-bound oxygenase mpaB then mediates the oxidative cleavage the C19-C20 double bond in FDHMP to yield FDHMP-3C via a mycophenolic aldehyde intermediate. The O-methyltransferase mpaG catalyzes the methylation of FDHMP-3C to yield MFDHMP-3C. After the cytosolic methylation of FDHMP-3C, MFDHMP-3C enters into peroxisomes probably via free diffusion due to its low molecular weight. Upon a peroxisomal CoA ligation reaction, catalyzed by a beta-oxidation component enzyme acyl-CoA ligase ACL891, MFDHMP-3C-CoA would then be restricted to peroxisomes for the following beta-oxidation pathway steps. The peroxisomal beta-oxidation machinery than converts MFDHMP-3C-CoA into MPA_CoA, via a beta-oxidation chain-shortening process. Finally mpaH acts as a peroxisomal acyl-CoA hydrolase with high substrate specificity toward MPA-CoA to release the final product MPA. This chain is Cytochrome P450 monooxygenase mpaDE, found in Penicillium roqueforti (strain FM164).